Consider the following 348-residue polypeptide: Nuclear receptor subfamily 1 group I member 3 (348 aa).

Positions 8–83 (LRNCVVCGDQ…AGMRKDMILS (76 aa)) form a DNA-binding region, nuclear receptor. The segment at 11–31 (CVVCGDQATGYHFNALTCEGC) adopts an NR C4-type zinc-finger fold. At Thr-38 the chain carries Phosphothreonine; by PKC. The NR C4-type zinc finger occupies 47–71 (CPFAGSCEVSKTQRRHCPACRLQKC). Residues 109–348 (EQEELIRTLL…MMPLLQEICS (240 aa)) form the NR LBD domain.

Belongs to the nuclear hormone receptor family. NR1 subfamily. Heterodimer of NR1I3 and RXR. Interacts with PSMC4. Interacts with ECT2. Directly interacts with DNAJC7; this complex may also include HSP90. Interacts with CRY1. Interacts with CRY2 in a ligand-dependent manner. In terms of processing, phosphorylated at Thr-38 by PKC, dephosphorylation of Thr-38 is required for nuclear translocation and activation.

Its subcellular location is the nucleus. It localises to the cytoplasm. It is found in the cytoskeleton. Its function is as follows. Binds and transactivates the retinoic acid response elements that control expression of the retinoic acid receptor beta 2 and alcohol dehydrogenase 3 genes. Transactivates both the phenobarbital responsive element module of the human CYP2B6 gene and the CYP3A4 xenobiotic response element. The protein is Nuclear receptor subfamily 1 group I member 3 (NR1I3) of Pan troglodytes (Chimpanzee).